Here is a 303-residue protein sequence, read N- to C-terminus: NAD kinase (303 aa).

Catalysis depends on D85, which acts as the Proton acceptor. NAD(+) contacts are provided by residues 85-86, 159-160, R187, D189, 200-205, A224, and Q258; these read DG, ND, and TAYALS.

This sequence belongs to the NAD kinase family. The cofactor is a divalent metal cation.

The protein localises to the cytoplasm. The catalysed reaction is NAD(+) + ATP = ADP + NADP(+) + H(+). Functionally, involved in the regulation of the intracellular balance of NAD and NADP, and is a key enzyme in the biosynthesis of NADP. Catalyzes specifically the phosphorylation on 2'-hydroxyl of the adenosine moiety of NAD to yield NADP. This is NAD kinase from Variovorax paradoxus (strain S110).